Reading from the N-terminus, the 423-residue chain is Serine--tRNA ligase (423 aa).

An L-serine-binding site is contributed by 231 to 233; sequence TAE. Residue 262–264 coordinates ATP; sequence RSE. E285 is a binding site for L-serine. Residue 349–352 coordinates ATP; that stretch reads EIGS. Residue S385 participates in L-serine binding.

This sequence belongs to the class-II aminoacyl-tRNA synthetase family. Type-1 seryl-tRNA synthetase subfamily. In terms of assembly, homodimer. The tRNA molecule binds across the dimer.

It localises to the cytoplasm. It carries out the reaction tRNA(Ser) + L-serine + ATP = L-seryl-tRNA(Ser) + AMP + diphosphate + H(+). It catalyses the reaction tRNA(Sec) + L-serine + ATP = L-seryl-tRNA(Sec) + AMP + diphosphate + H(+). The protein operates within aminoacyl-tRNA biosynthesis; selenocysteinyl-tRNA(Sec) biosynthesis; L-seryl-tRNA(Sec) from L-serine and tRNA(Sec): step 1/1. In terms of biological role, catalyzes the attachment of serine to tRNA(Ser). Is also able to aminoacylate tRNA(Sec) with serine, to form the misacylated tRNA L-seryl-tRNA(Sec), which will be further converted into selenocysteinyl-tRNA(Sec). The chain is Serine--tRNA ligase from Acholeplasma laidlawii (strain PG-8A).